Here is a 362-residue protein sequence, read N- to C-terminus: Histidinol-phosphate aminotransferase (362 aa).

Lysine 218 is subject to N6-(pyridoxal phosphate)lysine.

The protein belongs to the class-II pyridoxal-phosphate-dependent aminotransferase family. Histidinol-phosphate aminotransferase subfamily. As to quaternary structure, homodimer. Requires pyridoxal 5'-phosphate as cofactor.

The catalysed reaction is L-histidinol phosphate + 2-oxoglutarate = 3-(imidazol-4-yl)-2-oxopropyl phosphate + L-glutamate. The protein operates within amino-acid biosynthesis; L-histidine biosynthesis; L-histidine from 5-phospho-alpha-D-ribose 1-diphosphate: step 7/9. In Xanthomonas campestris pv. campestris (strain 8004), this protein is Histidinol-phosphate aminotransferase.